Consider the following 185-residue polypeptide: ATP-dependent protease subunit HslV (185 aa).

Residue T2 is part of the active site. G157, C160, and T163 together coordinate Na(+).

The protein belongs to the peptidase T1B family. HslV subfamily. A double ring-shaped homohexamer of HslV is capped on each side by a ring-shaped HslU homohexamer. The assembly of the HslU/HslV complex is dependent on binding of ATP.

The protein localises to the cytoplasm. The enzyme catalyses ATP-dependent cleavage of peptide bonds with broad specificity.. With respect to regulation, allosterically activated by HslU binding. Its function is as follows. Protease subunit of a proteasome-like degradation complex believed to be a general protein degrading machinery. The protein is ATP-dependent protease subunit HslV of Idiomarina loihiensis (strain ATCC BAA-735 / DSM 15497 / L2-TR).